Reading from the N-terminus, the 877-residue chain is Kinetochore null protein 2 (877 aa).

Residues 20 to 107 (IRLNLWSMKF…SNGIPENWAD (88 aa)) enclose the SANTA domain. Disordered stretches follow at residues 122 to 315 (RPIQ…SKSV), 338 to 535 (FEST…ESLN), and 549 to 604 (MMFG…NDSI). Residues 153–211 (QKNSENEKERNRREREEQQTKERERRLEEEKQRRDAEAEAERRRKEEEELEEANYTLRA) are a coiled coil. Over residues 156–199 (SENEKERNRREREEQQTKERERRLEEEKQRRDAEAEAERRRKEE) the composition is skewed to basic and acidic residues. The span at 251–279 (IASSTPQQKQRLADGANNQIPPTQKSQDS) shows a compositional bias: polar residues. Composition is skewed to basic and acidic residues over residues 359–385 (EPRH…DNSR), 394–444 (RRHE…RGRD), and 453–480 (VRFE…DYGR). Residues 491–549 (EDEEKLNAIVRREKELRNRLQKSQKASSSSYRHRSNSSDAEESLNEWDIENQELLDNSM) are a coiled coil. The segment covering 511–520 (QKSQKASSSS) has biased composition (low complexity). The segment covering 573–583 (RSKPANSTKSP) has biased composition (polar residues). Over residues 592 to 601 (ASLEDNRDLN) the composition is skewed to basic and acidic residues. The 62-residue stretch at 617 to 678 (VAKKITWRKQ…AITRLKWVEP (62 aa)) folds into the Myb-like domain. 2 disordered regions span residues 757 to 785 (RGGT…FNSP) and 808 to 877 (MQAR…TSIY). Polar residues-rich tracts occupy residues 775 to 785 (SRGNNSTFNSP) and 819 to 836 (SSSM…TSIS). Residues 856 to 871 (EDDENEDNDDDDDMRE) are compositionally biased toward acidic residues.

This sequence belongs to the KNL2 family. Interacts with hcp-3.

The protein resides in the nucleus. Its subcellular location is the chromosome. It is found in the centromere. It localises to the kinetochore. In terms of biological role, required for the recruitment of hcp-3, hcp-4, knl-1, bub-1 and lin-53 to kinetochores, kinetochore assembly, chromosome condensation and chromosome segregation in meiosis and mitosis. In Caenorhabditis elegans, this protein is Kinetochore null protein 2.